Reading from the N-terminus, the 554-residue chain is Hydroxylamine reductase (554 aa).

4 residues coordinate [2Fe-2S] cluster: Cys-3, Cys-6, Cys-18, and Cys-25. The hybrid [4Fe-2O-2S] cluster site is built by His-252, Glu-276, Cys-320, Cys-408, Cys-436, Cys-461, Glu-495, and Lys-497. Position 408 is a cysteine persulfide (Cys-408).

It belongs to the HCP family. The cofactor is [2Fe-2S] cluster. Hybrid [4Fe-2O-2S] cluster is required as a cofactor.

The protein resides in the cytoplasm. The enzyme catalyses A + NH4(+) + H2O = hydroxylamine + AH2 + H(+). In terms of biological role, catalyzes the reduction of hydroxylamine to form NH(3) and H(2)O. The sequence is that of Hydroxylamine reductase from Shewanella loihica (strain ATCC BAA-1088 / PV-4).